A 190-amino-acid chain; its full sequence is Xanthine phosphoribosyltransferase 1 (190 aa).

2 residues coordinate xanthine: leucine 20 and asparagine 27. Position 128–132 (alanine 128–alanine 132) interacts with 5-phospho-alpha-D-ribose 1-diphosphate. Xanthine is bound at residue lysine 156.

This sequence belongs to the purine/pyrimidine phosphoribosyltransferase family. Xpt subfamily. Homodimer.

It is found in the cytoplasm. It catalyses the reaction XMP + diphosphate = xanthine + 5-phospho-alpha-D-ribose 1-diphosphate. It participates in purine metabolism; XMP biosynthesis via salvage pathway; XMP from xanthine: step 1/1. Functionally, converts the preformed base xanthine, a product of nucleic acid breakdown, to xanthosine 5'-monophosphate (XMP), so it can be reused for RNA or DNA synthesis. The polypeptide is Xanthine phosphoribosyltransferase 1 (Clostridium botulinum (strain ATCC 19397 / Type A)).